Here is a 406-residue protein sequence, read N- to C-terminus: Phosphatidylinositol 5-phosphate 4-kinase type-2 alpha (406 aa).

Residue Ala-2 is modified to N-acetylalanine. Thr-3 is subject to Phosphothreonine. Ser-14 carries the phosphoserine modification. The 373-residue stretch at 33-405 (ASDPLLSVLM…RFLDFIGHIL (373 aa)) folds into the PIPK domain. Positions 59–65 (VMLMPDD) are required for interaction with PIP5K1A. Lys-89 and Lys-145 each carry N6-acetyllysine. A disordered region spans residues 287-328 (EQEEVECEENEGEEEGESDGAHPIGTPPDSPGNTLNSSPPLA). The span at 289-304 (EEVECEENEGEEEGES) shows a compositional bias: acidic residues.

In terms of assembly, homodimer. Interacts with PIP4K2B; the interaction may regulate localization to the nucleus. Probably interacts with PIP5K1A; the interaction inhibits PIP5K1A kinase activity. Post-translationally, phosphorylated in tyrosines. Phosphorylation is induced by light and increases kinase activity.

Its subcellular location is the cell membrane. It localises to the nucleus. The protein localises to the lysosome. The protein resides in the cytoplasm. It is found in the photoreceptor inner segment. Its subcellular location is the cell projection. It localises to the cilium. The protein localises to the photoreceptor outer segment. The catalysed reaction is a 1,2-diacyl-sn-glycero-3-phospho-(1D-myo-inositol-5-phosphate) + ATP = a 1,2-diacyl-sn-glycero-3-phospho-(1D-myo-inositol-4,5-bisphosphate) + ADP + H(+). The enzyme catalyses 1,2-dihexadecanoyl-sn-glycero-3-phospho-(1D-myo-inositol-5-phosphate) + ATP = 1,2-dihexadecanoyl-sn-glycero-3-phospho-(1D-myo-inositol-4,5-bisphosphate) + ADP + H(+). It carries out the reaction 1,2-dihexadecanoyl-sn-glycero-3-phospho-(1D-myo-inositol-5-phosphate) + GTP = 1,2-dihexadecanoyl-sn-glycero-3-phospho-(1D-myo-inositol-4,5-bisphosphate) + GDP + H(+). In rod outer segments, activated by light. In terms of biological role, catalyzes the phosphorylation of phosphatidylinositol 5-phosphate (PtdIns5P) on the fourth hydroxyl of the myo-inositol ring, to form phosphatidylinositol 4,5-bisphosphate (PtdIns(4,5)P2). Has both ATP- and GTP-dependent kinase activities. May exert its function by regulating the levels of PtdIns5P, which functions in the cytosol by increasing AKT activity and in the nucleus signals through ING2. May regulate the pool of cytosolic PtdIns5P in response to the activation of tyrosine phosphorylation. Required for lysosome-peroxisome membrane contacts and intracellular cholesterol transport through modulating peroxisomal PtdIns(4,5)P2 level. In collaboration with PIP4K2B, has a role in mediating autophagy in times of nutrient stress. Required for autophagosome-lysosome fusion and the regulation of cellular lipid metabolism. Negatively regulates insulin signaling through a catalytic-independent mechanism. PIP4Ks interact with PIP5Ks and suppress PIP5K-mediated PtdIns(4,5)P2 synthesis and insulin-dependent conversion to PtdIns(3,4,5)P3. May be involved in thrombopoiesis, and the terminal maturation of megakaryocytes and regulation of their size. The sequence is that of Phosphatidylinositol 5-phosphate 4-kinase type-2 alpha from Rattus norvegicus (Rat).